A 181-amino-acid chain; its full sequence is MVKTNILSNHFLVAMPQLNDFTFTKAVIYVSQHDAKGALGIIINRPLALTLGKVLEHLNIEIAQPQIANHPVLMGGPIGQEHGFIVYEQESPQGAEILLSASKDMLDDIAKNKGPDDFLITLGYAGWEAGQLENEIARNDWLVVPFNRKILFETPLKSRWQKAAALIGVDINQLSGQIGHA.

Belongs to the UPF0301 (AlgH) family.

The sequence is that of UPF0301 protein COXBURSA331_A2219 from Coxiella burnetii (strain RSA 331 / Henzerling II).